Consider the following 566-residue polypeptide: Peroxisomal targeting signal receptor (566 aa).

A Glycyl cysteine thioester (Cys-Gly) (interchain with G-Cter in ubiquitin) cross-link involves residue Cys-5. The segment at 6–28 (SVGSNPLAQLNKHAQQNPALRQV) is amphipathic helix 1 (AH1). A Glycyl lysine isopeptide (Lys-Gly) (interchain with G-Cter in ubiquitin) cross-link involves residue Lys-17. The amphipathic helix 2 (AH2) stretch occupies residues 53-71 (RFQMDQFMNRSPGFSDGQL). The segment at 88 to 159 (GLKKQDSGSS…IGRPMMHTGI (72 aa)) is disordered. Polar residues predominate over residues 94-142 (SGSSNMSAGDTAQHSRSWGNEFNSRSPQQGLASRVNNVERISNTNSMSS). The WxxxF/Y motif 1 signature appears at 111–115 (WGNEF). Residues 145–151 (PGMSRIG) are amphipathic helix 3 (AH3). Residues 187 to 191 (WNEQF) carry the WxxxF/Y motif 2 motif. An amphipathic helix 4 (AH4) region spans residues 225-241 (FQEVWDKLQAETADNNL). A WxxxF/Y motif 3 motif is present at residues 248 to 252 (WEKDY). TPR repeat units lie at residues 277-311 (NPNAYEIGCILMENGAKLSEAALAFEAAVQEDPAH), 312-345 (VDAWLKLGLVQTQNEKEMNGISALEQCLSLDPTN), 416-449 (PEVQLGLGTLFYANEEFGKTIDCFRTALEVNPND), 451-483 (LMWNRLGASLANSNRSEEAIQAYHKALALKPSF), and 485-517 (RARYNLAISSMNIGCYKEAAESLLSALSMHEVE).

This sequence belongs to the peroxisomal targeting signal receptor family. Interacts (via WxxxF/Y and LVxEF motifs) with PEX14; promoting translocation through the PEX13-PEX14 docking complex. Monoubiquitinated at Cys-5 by PEX2 during PEX5 passage through the retrotranslocation channel: monoubiquitination acts as a signal for PEX5 extraction and is required for proper export from peroxisomes and recycling. When PEX5 recycling is compromised, polyubiquitinated at Lys-17 by PEX10 during its passage through the retrotranslocation channel, leading to its degradation.

Its subcellular location is the cytoplasm. The protein localises to the cytosol. It localises to the peroxisome matrix. Its function is as follows. Receptor that mediates peroxisomal import of proteins containing a C-terminal PTS1-type tripeptide peroxisomal targeting signal (SKL-type). Binds to cargo proteins containing a PTS1 peroxisomal targeting signal in the cytosol, and translocates them into the peroxisome matrix by passing through the PEX13-PEX14 docking complex along with cargo proteins. PEX5 receptor is then retrotranslocated into the cytosol, leading to release of bound cargo in the peroxisome matrix, and reset for a subsequent peroxisome import cycle. The protein is Peroxisomal targeting signal receptor (PEX5) of Kluyveromyces lactis (strain ATCC 8585 / CBS 2359 / DSM 70799 / NBRC 1267 / NRRL Y-1140 / WM37) (Yeast).